The primary structure comprises 487 residues: L-tartrate/succinate antiporter (487 aa).

The next 14 membrane-spanning stretches (helical) occupy residues 10–30 (YLAP…AGLE), 33–53 (TWLY…EPVP), 54–74 (GAVV…WLLF), 93–113 (WAVS…FMFG), 137–157 (TLFL…VTPS), 189–209 (IGSY…AIFL), 236–256 (FLGM…LAYV), 292–312 (LIVG…AAMV), 313–333 (GYSV…DIVS), 340–360 (VFFW…TGFI), 370–390 (SLSG…FYLL), 393–413 (FFAS…AAAL), 418–438 (IPLP…SILT), and 465–485 (IFGL…MPVV).

It belongs to the SLC13A/DASS transporter (TC 2.A.47) family. DIT1 subfamily.

It is found in the cell inner membrane. The enzyme catalyses (2R,3R)-tartrate(out) + succinate(in) = (2R,3R)-tartrate(in) + succinate(out). Catalyzes the uptake of tartrate in exchange for intracellular succinate. Essential for anaerobic L-tartrate fermentation. The polypeptide is L-tartrate/succinate antiporter (ttdT) (Shigella sonnei (strain Ss046)).